The primary structure comprises 389 residues: Lipid-A-disaccharide synthase (389 aa).

The protein belongs to the LpxB family.

It catalyses the reaction a lipid X + a UDP-2-N,3-O-bis[(3R)-3-hydroxyacyl]-alpha-D-glucosamine = a lipid A disaccharide + UDP + H(+). It participates in bacterial outer membrane biogenesis; LPS lipid A biosynthesis. Functionally, condensation of UDP-2,3-diacylglucosamine and 2,3-diacylglucosamine-1-phosphate to form lipid A disaccharide, a precursor of lipid A, a phosphorylated glycolipid that anchors the lipopolysaccharide to the outer membrane of the cell. The chain is Lipid-A-disaccharide synthase from Burkholderia lata (strain ATCC 17760 / DSM 23089 / LMG 22485 / NCIMB 9086 / R18194 / 383).